The primary structure comprises 243 residues: Uridylate kinase (243 aa).

15-18 (KISG) contacts ATP. Gly57 contacts UMP. ATP-binding residues include Gly58 and Arg62. UMP-binding positions include Asp77 and 138 to 145 (TGNPFFTT). ATP contacts are provided by Thr165, Phe171, and Asp174.

Belongs to the UMP kinase family. Homohexamer.

It localises to the cytoplasm. It catalyses the reaction UMP + ATP = UDP + ADP. It functions in the pathway pyrimidine metabolism; CTP biosynthesis via de novo pathway; UDP from UMP (UMPK route): step 1/1. Its activity is regulated as follows. Inhibited by UTP. Functionally, catalyzes the reversible phosphorylation of UMP to UDP. This chain is Uridylate kinase, found in Blochmanniella floridana.